The primary structure comprises 276 residues: MVDGHLEASTRGFDVNRPPSSGGGGGAEEEQDDVAGAALSSSPNNSAGSFPMDDFSGHGLGGNDAAPGGGGGDRSCSRASDEDDGGSARKKLRLSKEQSAFLEESFKEHSTLNPKQKLALAKQLNLRPRQVEVWFQNRRARTKLKQTEVDCEYLKRCCETLTEENRRLQKELAELRALKTVHPFYMHLPATTLSMCPSCERVASNSAPATASSAATSSTAAPPAAPSSGGIAATSSSSAAAAAAPDHRPSSFAALFSSPRGFPLSVAPQAQPPTSS.

The disordered stretch occupies residues 1-92 (MVDGHLEAST…DDGGSARKKL (92 aa)). A compositionally biased stretch (polar residues) spans 39–48 (LSSSPNNSAG). The segment covering 58–73 (HGLGGNDAAPGGGGGD) has biased composition (gly residues). Residues 87–146 (SARKKLRLSKEQSAFLEESFKEHSTLNPKQKLALAKQLNLRPRQVEVWFQNRRARTKLKQ) constitute a DNA-binding region (homeobox). A leucine-zipper region spans residues 145–189 (KQTEVDCEYLKRCCETLTEENRRLQKELAELRALKTVHPFYMHLP). Positions 214–244 (AATSSTAAPPAAPSSGGIAATSSSSAAAAAA) are disordered.

The protein belongs to the HD-ZIP homeobox family. Class II subfamily. As to expression, expressed in stems, leaf sheaths and blades and panicles.

It localises to the nucleus. In terms of biological role, probable transcription factor. The chain is Homeobox-leucine zipper protein HOX11 (HOX11) from Oryza sativa subsp. indica (Rice).